Reading from the N-terminus, the 148-residue chain is Probable transporter PD_1893 (148 aa).

The next 4 membrane-spanning stretches (helical) occupy residues 11 to 31 (FTVALAAGLLFGFGLALSEMI), 48 to 68 (NPSLLFVLGSALAVAFPGMAL), 93 to 113 (IVFGSAIFGTGWGLTGLCPGP), and 118 to 138 (LSTGLGSVLLFVAAMAAGMII).

The protein belongs to the TsuA/YedE (TC 9.B.102) family.

The protein resides in the cell inner membrane. This Xylella fastidiosa (strain Temecula1 / ATCC 700964) protein is Probable transporter PD_1893.